Reading from the N-terminus, the 326-residue chain is Holliday junction branch migration complex subunit RuvB (326 aa).

The segment at 1 to 180 is large ATPase domain (RuvB-L); sequence MRSISCSKEY…FGIPLRLEFY (180 aa). ATP contacts are provided by residues I19, R20, G61, K64, T65, T66, 127-129, R170, Y180, and R217; that span reads EDF. Mg(2+) is bound at residue T65. Positions 181 to 251 are small ATPAse domain (RuvB-S); it reads SFEELVDIIK…IADSALSKLG (71 aa). Residues 254-326 are head domain (RuvB-H); sequence KMGLNKLDVD…QGKEYLSLQY (73 aa). R307 and R312 together coordinate DNA.

The protein belongs to the RuvB family. In terms of assembly, homohexamer. Forms an RuvA(8)-RuvB(12)-Holliday junction (HJ) complex. HJ DNA is sandwiched between 2 RuvA tetramers; dsDNA enters through RuvA and exits via RuvB. An RuvB hexamer assembles on each DNA strand where it exits the tetramer. Each RuvB hexamer is contacted by two RuvA subunits (via domain III) on 2 adjacent RuvB subunits; this complex drives branch migration. In the full resolvosome a probable DNA-RuvA(4)-RuvB(12)-RuvC(2) complex forms which resolves the HJ.

Its subcellular location is the cytoplasm. It catalyses the reaction ATP + H2O = ADP + phosphate + H(+). Its function is as follows. The RuvA-RuvB-RuvC complex processes Holliday junction (HJ) DNA during genetic recombination and DNA repair, while the RuvA-RuvB complex plays an important role in the rescue of blocked DNA replication forks via replication fork reversal (RFR). RuvA specifically binds to HJ cruciform DNA, conferring on it an open structure. The RuvB hexamer acts as an ATP-dependent pump, pulling dsDNA into and through the RuvAB complex. RuvB forms 2 homohexamers on either side of HJ DNA bound by 1 or 2 RuvA tetramers; 4 subunits per hexamer contact DNA at a time. Coordinated motions by a converter formed by DNA-disengaged RuvB subunits stimulates ATP hydrolysis and nucleotide exchange. Immobilization of the converter enables RuvB to convert the ATP-contained energy into a lever motion, pulling 2 nucleotides of DNA out of the RuvA tetramer per ATP hydrolyzed, thus driving DNA branch migration. The RuvB motors rotate together with the DNA substrate, which together with the progressing nucleotide cycle form the mechanistic basis for DNA recombination by continuous HJ branch migration. Branch migration allows RuvC to scan DNA until it finds its consensus sequence, where it cleaves and resolves cruciform DNA. The sequence is that of Holliday junction branch migration complex subunit RuvB from Wolbachia sp. subsp. Brugia malayi (strain TRS).